We begin with the raw amino-acid sequence, 440 residues long: Chromosome partition protein MukF (440 aa).

Residues 208–236 (LSETSGTLRELQDTLDAAGDKLQANLLRI) form a leucine-zipper region.

Belongs to the MukF family. As to quaternary structure, interacts, and probably forms a ternary complex, with MukE and MukB via its C-terminal region. The complex formation is stimulated by calcium or magnesium. It is required for an interaction between MukE and MukB.

The protein localises to the cytoplasm. It localises to the nucleoid. Functionally, involved in chromosome condensation, segregation and cell cycle progression. May participate in facilitating chromosome segregation by condensation DNA from both sides of a centrally located replisome during cell division. Not required for mini-F plasmid partitioning. Probably acts via its interaction with MukB and MukE. Overexpression results in anucleate cells. It has a calcium binding activity. The polypeptide is Chromosome partition protein MukF (Klebsiella pneumoniae (strain 342)).